A 276-amino-acid chain; its full sequence is Undecaprenyl-diphosphatase 1 (276 aa).

A run of 6 helical transmembrane segments spans residues 44–63 (ALAF…IWEY), 85–105 (VNLL…ADLI), 109–129 (LFNP…MLWA), 183–203 (AATE…AVYS), 214–234 (GDFA…MLAV), and 249–269 (FAWY…LGMI).

It belongs to the UppP family.

Its subcellular location is the cell inner membrane. The catalysed reaction is di-trans,octa-cis-undecaprenyl diphosphate + H2O = di-trans,octa-cis-undecaprenyl phosphate + phosphate + H(+). In terms of biological role, catalyzes the dephosphorylation of undecaprenyl diphosphate (UPP). Confers resistance to bacitracin. The protein is Undecaprenyl-diphosphatase 1 of Stutzerimonas stutzeri (strain A1501) (Pseudomonas stutzeri).